The following is a 308-amino-acid chain: Growth/differentiation factor 15 (308 aa).

Positions 1-29 are cleaved as a signal peptide; the sequence is MPGQELRTVNGSQMLLVLLVLSWLPHGGA. Positions 30–194 are excised as a propeptide; sequence LSLAEASRAS…RPQAARGRRR (165 aa). N70 carries an N-linked (GlcNAc...) asparagine glycan. The disordered stretch occupies residues 152–177; it reads APALHLRLSPPPSQSDQLLAESSSAR. Residues 165–177 show a composition bias toward polar residues; it reads QSDQLLAESSSAR. 4 disulfide bridges follow: C203–C210, C211–C274, C240–C305, and C244–C307.

It belongs to the TGF-beta family. In terms of assembly, homodimer; disulfide-linked. Interacts with GFRAL and RET; ligand of GFRAL, which mediates GDF15 internalization and cellular signaling through interaction with RET via the formation of a 2:2:2 ternary complex composed of GDF15, GFRAL and RET. As to expression, detected in plasma (at protein level). Highly expressed in placenta, with lower levels in prostate and colon and some expression in kidney.

It is found in the secreted. In terms of biological role, hormone produced in response to various stresses to confer information about those stresses to the brain, and trigger an aversive response, characterized by nausea, vomiting, and/or loss of appetite. The aversive response is both required to reduce continuing exposure to those stresses at the time of exposure and to promote avoidance behavior in the future. Acts by binding to its receptor, GFRAL, activating GFRAL-expressing neurons localized in the area postrema and nucleus tractus solitarius of the brainstem. It then triggers the activation of neurons localized within the parabrachial nucleus and central amygdala, which constitutes part of the 'emergency circuit' that shapes responses to stressful conditions. The GDF15-GFRAL signal induces expression of genes involved in metabolism, such as lipid metabolism in adipose tissues. Required for avoidance behavior in response to food allergens: induced downstream of mast cell activation to promote aversion and minimize harmful effects of exposure to noxious substances. In addition to suppress appetite, also promotes weight loss by enhancing energy expenditure in muscle: acts by increasing calcium futile cycling in muscle. Contributes to the effect of metformin, an anti-diabetic drug, on appetite reduction and weight loss: produced in the kidney in response to metformin treatment, thereby activating the GDF15-GFRAL response, leading to reduced appetite and weight. The contribution of GDF15 to weight loss following metformin treatment is however limited and subject to discussion. Produced in response to anticancer drugs, such as camptothecin or cisplatin, promoting nausea, vomiting and contributing to malnutrition. Overproduced in many cancers, promoting anorexia in cancer (cachexia). Responsible for the risk of nausea and vomiting during pregnancy: high levels of GDF15 during pregnancy, mostly originating from the fetus, are associated with increased nausea and vomiting. Maternal sensitivity to nausea is probably determined by pre-pregnancy exposure to GDF15, women with naturally high level of GDF15 being less susceptible to nausea than women with low levels of GDF15 before pregnancy. Promotes metabolic adaptation in response to systemic inflammation caused by bacterial and viral infections in order to promote tissue tolerance and prevent tissue damage. Required for tissue tolerance in response to myocardial infarction by acting as an inhibitor of leukocyte integring activation, thereby protecting against cardiac rupture. Inhibits growth hormone signaling on hepatocytes. The sequence is that of Growth/differentiation factor 15 from Homo sapiens (Human).